Consider the following 405-residue polypeptide: Tryptophan synthase beta chain (405 aa).

Lysine 95 carries the post-translational modification N6-(pyridoxal phosphate)lysine.

The protein belongs to the TrpB family. As to quaternary structure, tetramer of two alpha and two beta chains. Requires pyridoxal 5'-phosphate as cofactor.

The enzyme catalyses (1S,2R)-1-C-(indol-3-yl)glycerol 3-phosphate + L-serine = D-glyceraldehyde 3-phosphate + L-tryptophan + H2O. The protein operates within amino-acid biosynthesis; L-tryptophan biosynthesis; L-tryptophan from chorismate: step 5/5. The beta subunit is responsible for the synthesis of L-tryptophan from indole and L-serine. The polypeptide is Tryptophan synthase beta chain (Pseudomonas putida (strain W619)).